A 270-amino-acid chain; its full sequence is Phospholysine phosphohistidine inorganic pyrophosphate phosphatase (270 aa).

Aspartate 17 and serine 19 together coordinate Mg(2+). Substrate-binding positions include 17 to 19 (DIS), 54 to 55 (TN), and lysine 189. Residue aspartate 214 coordinates Mg(2+).

This sequence belongs to the HAD-like hydrolase superfamily. As to quaternary structure, homodimer. It depends on Mg(2+) as a cofactor. Expressed in brain, and at lower levels in liver and kidney. Detected in thyroid (at protein level). Expressed in liver, kidney and moderately in brain.

Its subcellular location is the cytoplasm. It is found in the nucleus. It carries out the reaction diphosphate + H2O = 2 phosphate + H(+). In terms of biological role, phosphatase that hydrolyzes imidodiphosphate, 3-phosphohistidine and 6-phospholysine. Has broad substrate specificity and can also hydrolyze inorganic diphosphate, but with lower efficiency. The chain is Phospholysine phosphohistidine inorganic pyrophosphate phosphatase (LHPP) from Homo sapiens (Human).